We begin with the raw amino-acid sequence, 391 residues long: Homocitrate synthase AksA (391 aa).

In terms of domain architecture, Pyruvate carboxyltransferase spans 20 to 271 (ITIYDTTLRD…DLGFNIGVLY (252 aa)).

The protein belongs to the alpha-IPM synthase/homocitrate synthase family.

It catalyses the reaction acetyl-CoA + 2-oxoglutarate + H2O = (2R)-homocitrate + CoA + H(+). It carries out the reaction 2-oxoadipate + acetyl-CoA + H2O = (R)-dihomocitrate + CoA + H(+). The enzyme catalyses 2-oxoheptanedioate + acetyl-CoA + H2O = (R)-trihomocitrate + CoA + H(+). Its pathway is organic acid metabolism; 2-oxosuberate biosynthesis. Functionally, catalyzes the condensation of alpha-ketoglutarate and acetyl-CoA to form (R)-homocitrate. Can also catalyze the condensation of alpha-ketoadipate with acetyl-CoA to form (R)-homo(2)citrate, and the condensation of alpha-ketopimelate with acetyl-CoA to form (R)-homo(3)citrate. These reactions are part of the biosynthesis pathway of coenzyme B and biotin. The polypeptide is Homocitrate synthase AksA (aksA) (Methanothermobacter thermautotrophicus (strain ATCC 29096 / DSM 1053 / JCM 10044 / NBRC 100330 / Delta H) (Methanobacterium thermoautotrophicum)).